The sequence spans 57 residues: Potassium channel toxin alpha-KTx 23.3 (57 aa).

An N-terminal signal peptide occupies residues 1–23 (MKMSIVIILLLFTCLIATNGASG). 4 cysteine pairs are disulfide-bonded: C26–C46, C32–C51, C36–C53, and C41–C56.

This sequence belongs to the short scorpion toxin superfamily. Potassium channel inhibitor family. Alpha-KTx 23 subfamily. In terms of tissue distribution, expressed by the venom gland.

Its subcellular location is the secreted. This toxin shows both immunosuppressive and anti-inflammatory activities. It has the potential to inhibit human T cell activation, since it reduces IL-2 secretion and the expression of T cell activation marker CD69 and acts as an anti-inflammatory agent, since it provokes the reduction of secretion of both IFN-gamma and TNF-alpha. In vivo, the delayed-type hypersensitivity response in rat autoimmune disease model is ameliorated in the presence of this toxin. Acts by blocking Kv1.3/KCNA3 potassium channels of T-lymphocytes. This Scorpiops tibetanus (Scorpion) protein is Potassium channel toxin alpha-KTx 23.3.